The following is a 2188-amino-acid chain: Phenolphthiocerol/phthiocerol polyketide synthase subunit C (2188 aa).

The Ketosynthase family 3 (KS3) domain maps to Ser34–Gln462. Residues Cys210, His345, and His384 each act as for beta-ketoacyl synthase activity in the active site. The tract at residues Val572–Pro890 is acyltransferase. The For malonyltransferase activity role is filled by Ser660. The interval His928–Ala1050 is N-terminal hotdog fold. Residues His928 to Ile1093 form a dehydratase region. In terms of domain architecture, PKS/mFAS DH spans His928 to Ala1223. His959 functions as the Proton acceptor; for dehydratase activity in the catalytic mechanism. Residues Glu1067–Ala1223 are C-terminal hotdog fold. The Proton donor; for dehydratase activity role is filled by Asp1129. The tract at residues Gly1467 to Ile1778 is enoylreductase. Residues Gly1802–Val1981 form a beta-ketoacyl reductase region. Gly1803–Leu1848 serves as a coordination point for NADP(+). Positions Glu2069 to Met2145 constitute a Carrier domain. Ser2105 carries the O-(pantetheine 4'-phosphoryl)serine modification.

Homodimer. Requires NADP(+) as cofactor. It depends on pantetheine 4'-phosphate as a cofactor.

It catalyses the reaction icosanoyl-[(phenol)carboxyphthiodiolenone synthase] + 2 (S)-methylmalonyl-CoA + 3 malonyl-CoA + 5 NADPH + 10 H(+) = C32-carboxyphthiodiolenone-[(phenol)carboxyphthiodiolenone synthase] + 5 CO2 + 5 NADP(+) + 5 CoA + 2 H2O. The enzyme catalyses docosanoyl-[(phenol)carboxyphthiodiolenone synthase] + 2 (S)-methylmalonyl-CoA + 3 malonyl-CoA + 5 NADPH + 10 H(+) = C34-carboxyphthiodiolenone-[(phenol)carboxyphthiodiolenone synthase] + 5 CO2 + 5 NADP(+) + 5 CoA + 2 H2O. It carries out the reaction 17-(4-hydroxyphenyl)heptadecanoyl-[(phenol)carboxyphthiodiolenone synthase] + 2 (S)-methylmalonyl-CoA + 3 malonyl-CoA + 5 NADPH + 10 H(+) = C35-(phenol)carboxyphthiodiolenone-[(phenol)carboxyphthiodiolenone synthase] + 5 CO2 + 5 NADP(+) + 5 CoA + 2 H2O. The catalysed reaction is 19-(4-hydroxyphenyl)nonadecanoyl-[(phenol)carboxyphthiodiolenone synthase] + 2 (S)-methylmalonyl-CoA + 3 malonyl-CoA + 5 NADPH + 10 H(+) = C37-(phenol)carboxyphthiodiolenone-[(phenol)carboxyphthiodiolenone synthase] + 5 CO2 + 5 NADP(+) + 5 CoA + 2 H2O. It functions in the pathway lipid metabolism; fatty acid biosynthesis. Part of the PpsABCDE complex involved in the biosynthesis of the lipid core common to phthiocerols and phenolphthiocerols by successive additions of malonyl-CoA or methylmalonyl-CoA extender units. PpsA can accept as substrate the activated forms of either icosanoyl (C20), docosanoyl (C22) or lignoceroyl (C24) groups from FadD26, or a (4-hydroxyphenyl)-C17 or (4-hydroxyphenyl)-C19 fatty acyl from FadD29. PpsA initiates the biosynthesis and extends its substrate using a malonyl-CoA extender unit. The PpsB and PpsC proteins add the second and third malonyl-CoA extender units. PpsD adds an (R)-methylmalonyl unit and PpsE adds a second (R)-methylmalonyl unit. The incorporation of the methylmalonyl units results in formation of two branched methyl groups in the elongated product. This chain is Phenolphthiocerol/phthiocerol polyketide synthase subunit C (ppsC), found in Mycobacterium bovis (strain ATCC BAA-935 / AF2122/97).